A 206-amino-acid chain; its full sequence is Protein Ta0236 (206 aa).

Residues 16–205 (DIGTKAVRLA…EKDPEGVVEK (190 aa)) form the AMMECR1 domain.

The chain is Protein Ta0236 from Thermoplasma acidophilum (strain ATCC 25905 / DSM 1728 / JCM 9062 / NBRC 15155 / AMRC-C165).